We begin with the raw amino-acid sequence, 648 residues long: Protein kinase YegI (648 aa).

The 288-residue stretch at 15 to 302 folds into the Protein kinase domain; it reads TTLGRELGKG…KAWVAALDSL (288 aa). Residues 21–29 and Lys41 contribute to the ATP site; that span reads LGKGGEGAV. The active-site Proton acceptor is the Asp143.

Post-translationally, autophosphorylated. Dephosphorylated by PphC.

Its function is as follows. Probable serine/threonine kinase. The sequence is that of Protein kinase YegI (yegI) from Escherichia coli (strain K12).